The following is a 266-amino-acid chain: 15-hydroxyprostaglandin dehydrogenase [NAD(+)] (266 aa).

Residues 12 to 20 (GAAQGIGRA), 36 to 37 (DW), 63 to 65 (CDV), and N91 each bind NAD(+). S138 and Q148 together coordinate substrate. The active-site Proton acceptor is Y151. Residues 151–155 (YCASK) and 186–188 (VNT) contribute to the NAD(+) site.

The protein belongs to the short-chain dehydrogenases/reductases (SDR) family. In terms of assembly, homodimer. In terms of tissue distribution, detected in colon epithelium (at protein level).

The protein localises to the cytoplasm. The enzyme catalyses prostaglandin E2 + NAD(+) = 15-oxoprostaglandin E2 + NADH + H(+). The catalysed reaction is (15S)-hydroxy-(5Z,8Z,11Z,13E)-eicosatetraenoate + NAD(+) = 15-oxo-(5Z,8Z,11Z,13E)-eicosatetraenoate + NADH + H(+). It catalyses the reaction (11R)-hydroxy-(5Z,8Z,12E,14Z)-eicosatetraenoate + NAD(+) = 11-oxo-(5Z,8Z,12E,14Z)-eicosatetraenoate + NADH + H(+). It carries out the reaction lipoxin A4 + NAD(+) = 15-oxo-(5S,6R)-dihydroxy-(7E,9E,11Z,13E)-eicosatetraenoate + NADH + H(+). The enzyme catalyses 15-oxo-(5S,6R)-dihydroxy-(7E,9E,11Z)-eicosatrienoate + NADH + H(+) = (5S,6R,15S)-trihydroxy-(7E,9E,11Z)-eicosatrienoate + NAD(+). The catalysed reaction is prostaglandin A1 + NAD(+) = 15-oxo-prostaglandin A1 + NADH + H(+). It catalyses the reaction prostaglandin E1 + NAD(+) = 15-oxoprostaglandin E1 + NADH + H(+). It carries out the reaction 14-hydroxy-(4Z,7Z,10Z,12E,16Z,19Z)-docosahexaenoate + NAD(+) = 14-oxo-(4Z,7Z,10Z,12E,16Z,19Z)-docosahexaenoate + NADH + H(+). The enzyme catalyses resolvin E1 + NAD(+) = 18-oxo-resolvin E1 + NADH + H(+). The catalysed reaction is resolvin D1 + NAD(+) = 8-oxoresolvin D1 + NADH + H(+). It catalyses the reaction resolvin D1 + NAD(+) = 17-oxoresolvin D1 + NADH + H(+). It carries out the reaction resolvin D2 + NAD(+) = 7-oxoresolvin D2 + NADH + H(+). The enzyme catalyses resolvin D2 + NAD(+) = 16-oxoresolvin D2 + NADH + H(+). In terms of biological role, catalyzes the NAD-dependent dehydrogenation (oxidation) of a broad array of hydroxylated polyunsaturated fatty acids (mainly eicosanoids and docosanoids, including prostaglandins, lipoxins and resolvins), yielding their corresponding keto (oxo) metabolites. Decreases the levels of the pro-proliferative prostaglandins such as prostaglandin E2 (whose activity is increased in cancer because of an increase in the expression of cyclooxygenase 2) and generates oxo-fatty acid products that can profoundly influence cell function by abrogating pro-inflammatory cytokine expression. Converts resolvins E1, D1 and D2 to their oxo products, which represents a mode of resolvin inactivation. Resolvin E1 plays important roles during the resolution phase of acute inflammation, while resolvins D1 and D2 have a unique role in obesity-induced adipose inflammation. In Homo sapiens (Human), this protein is 15-hydroxyprostaglandin dehydrogenase [NAD(+)].